Here is a 394-residue protein sequence, read N- to C-terminus: Salivary plasminogen activator gamma (394 aa).

An N-terminal signal peptide occupies residues 1 to 36 (MVNTMKTKLLCVLLLCGAVFSLPRQETYRQLARGSR). The 82-residue stretch at 45-126 (CYKDQGVTYR…TSESCSVPVC (82 aa)) folds into the Kringle domain. 9 cysteine pairs are disulfide-bonded: cysteine 45-cysteine 126, cysteine 66-cysteine 108, cysteine 97-cysteine 121, cysteine 131-cysteine 262, cysteine 174-cysteine 190, cysteine 182-cysteine 251, cysteine 276-cysteine 351, cysteine 308-cysteine 324, and cysteine 341-cysteine 369. Residues 143–393 (STGGLFTDIT…YLGWIRDNMR (251 aa)) enclose the Peptidase S1 domain. Active-site charge relay system residues include histidine 189 and aspartate 238. An N-linked (GlcNAc...) asparagine glycan is attached at asparagine 315. The Charge relay system role is filled by serine 345.

This sequence belongs to the peptidase S1 family. As to quaternary structure, monomer.

The protein localises to the secreted. The catalysed reaction is Specific cleavage of Arg-|-Val bond in plasminogen to form plasmin.. Its function is as follows. Probably essential to support the feeding habits of this exclusively haematophagous animal. Probable potent thrombolytic agent. This is Salivary plasminogen activator gamma from Desmodus rotundus (Vampire bat).